We begin with the raw amino-acid sequence, 213 residues long: Protein-L-isoaspartate O-methyltransferase (213 aa).

The active site involves serine 60.

Belongs to the methyltransferase superfamily. L-isoaspartyl/D-aspartyl protein methyltransferase family.

It is found in the cytoplasm. The enzyme catalyses [protein]-L-isoaspartate + S-adenosyl-L-methionine = [protein]-L-isoaspartate alpha-methyl ester + S-adenosyl-L-homocysteine. Catalyzes the methyl esterification of L-isoaspartyl residues in peptides and proteins that result from spontaneous decomposition of normal L-aspartyl and L-asparaginyl residues. It plays a role in the repair and/or degradation of damaged proteins. This is Protein-L-isoaspartate O-methyltransferase from Roseobacter denitrificans (strain ATCC 33942 / OCh 114) (Erythrobacter sp. (strain OCh 114)).